Consider the following 201-residue polypeptide: MARYTGPVTRKSRRLGVDLVGGDQSFEKRPYPPGQHGRARIKESEYRTQLQEKQKARFTYGVMEKQFRRYYEEANRLPGKTGDNLLRILESRLDNVVYRAGLARTRRMARQLVSHGHFTVNGVKVDVPSYRVSQYDIIDVKDKSINTLPFEVARQTAGERPIPGWLQVVGERQRILVHQLPERAQIDVPLTEQLIVELYSK.

Positions 91 to 151 (SRLDNVVYRA…DKSINTLPFE (61 aa)) constitute an S4 RNA-binding domain.

This sequence belongs to the universal ribosomal protein uS4 family. As to quaternary structure, part of the 30S ribosomal subunit. Contacts protein S5. The interaction surface between S4 and S5 is involved in control of translational fidelity.

One of the primary rRNA binding proteins, it binds directly to 16S rRNA where it nucleates assembly of the body of the 30S subunit. In terms of biological role, with S5 and S12 plays an important role in translational accuracy. The protein is Small ribosomal subunit protein uS4 of Mycolicibacterium gilvum (strain PYR-GCK) (Mycobacterium gilvum (strain PYR-GCK)).